Consider the following 478-residue polypeptide: Protein nucleotidyltransferase YdiU (478 aa).

Residues glycine 84, glycine 86, arginine 87, lysine 107, aspartate 119, glycine 120, arginine 170, and arginine 177 each contribute to the ATP site. Aspartate 246 (proton acceptor) is an active-site residue. 2 residues coordinate Mg(2+): asparagine 247 and aspartate 256. Aspartate 256 is an ATP binding site.

Belongs to the SELO family. Mg(2+) serves as cofactor. Mn(2+) is required as a cofactor.

It catalyses the reaction L-seryl-[protein] + ATP = 3-O-(5'-adenylyl)-L-seryl-[protein] + diphosphate. The catalysed reaction is L-threonyl-[protein] + ATP = 3-O-(5'-adenylyl)-L-threonyl-[protein] + diphosphate. The enzyme catalyses L-tyrosyl-[protein] + ATP = O-(5'-adenylyl)-L-tyrosyl-[protein] + diphosphate. It carries out the reaction L-histidyl-[protein] + UTP = N(tele)-(5'-uridylyl)-L-histidyl-[protein] + diphosphate. It catalyses the reaction L-seryl-[protein] + UTP = O-(5'-uridylyl)-L-seryl-[protein] + diphosphate. The catalysed reaction is L-tyrosyl-[protein] + UTP = O-(5'-uridylyl)-L-tyrosyl-[protein] + diphosphate. Its function is as follows. Nucleotidyltransferase involved in the post-translational modification of proteins. It can catalyze the addition of adenosine monophosphate (AMP) or uridine monophosphate (UMP) to a protein, resulting in modifications known as AMPylation and UMPylation. The polypeptide is Protein nucleotidyltransferase YdiU (Escherichia coli O157:H7).